The following is a 523-amino-acid chain: Keratin, type II cytoskeletal 71 (523 aa).

Positions M1 to Q129 are head. The coil 1A stretch occupies residues E130–L165. One can recognise an IF rod domain in the interval E130–M443. The interval Q166 to Y184 is linker 1. Residues I185 to I276 form a coil 1B region. A linker 12 region spans residues Q277–I300. A coil 2 region spans residues I301–E439. A tail region spans residues E440–R523. The segment at G492–R523 is disordered. Basic and acidic residues predominate over residues G493–L508. The segment covering K510–R523 has biased composition (polar residues).

This sequence belongs to the intermediate filament family. Heterodimer of a type I and a type II keratin. Associates with KRT16 and/or KRT17. Highly expressed in hair follicles from scalp. Specifically expressed in the inner root sheath (IRS) of the hair follicle. Present in the all 3 IRS layers: the cuticle, the Henle and the Huxley layers. Also detected in the pseudopods of specialized Huxley cells, termed Fluegelzellen, along the area of differentiated Henle cells (at protein level).

It localises to the cytoplasm. It is found in the cytoskeleton. In terms of biological role, plays a central role in hair formation. Essential component of keratin intermediate filaments in the inner root sheath (IRS) of the hair follicle. This chain is Keratin, type II cytoskeletal 71 (KRT71), found in Homo sapiens (Human).